The following is a 63-amino-acid chain: Large ribosomal subunit protein uL29 (63 aa).

The protein belongs to the universal ribosomal protein uL29 family.

This chain is Large ribosomal subunit protein uL29, found in Shewanella loihica (strain ATCC BAA-1088 / PV-4).